A 118-amino-acid polypeptide reads, in one-letter code: Vesicle-associated membrane protein 1 (118 aa).

A disordered region spans residues 1 to 36 (MSAPAQPPAEGTEGTAPGGGPPGPPPNMTSNRRLQQ). Over 1-96 (MSAPAQPPAE…KRKYWWKNCK (96 aa)) the chain is Cytoplasmic. One can recognise a v-SNARE coiled-coil homology domain in the interval 33 to 93 (RLQQTQAQVE…AKLKRKYWWK (61 aa)). The residue at position 63 (Ser63) is a Phosphoserine. Residues 97 to 116 (MMIMLGAICAIIVVVIVIYF) form a helical; Anchor for type IV membrane protein membrane-spanning segment. Residues 117 to 118 (FT) lie on the Vesicular side of the membrane.

It belongs to the synaptobrevin family. Interacts with VAPA and VAPB. (Microbial infection) Targeted and hydrolyzed by C.botulinum neurotoxin type B (BoNT/B, botB) which probably hydrolyzes the 78-Gln-|-Phe-79 bond and inhibits neurotransmitter release. In terms of processing, (Microbial infection) Targeted and hydrolyzed by C.botulinum neurotoxin type D (BoNT/D, botD) which probably hydrolyzes the 61-Arg-|-Leu-62 bond and inhibits neurotransmitter release. BoNT/D has low catalytic activity on this protein due to its sequence. Note that humans are not known to be infected by C.botulinum type D. Post-translationally, (Microbial infection) Targeted and hydrolyzed by C.botulinum neurotoxin type F (BoNT/F, botF) which probably hydrolyzes the 60-Gln-|-Lys-61 bond and inhibits neurotransmitter release. (Microbial infection) Targeted and hydrolyzed by C.botulinum neurotoxin type X (BoNT/X) which probably hydrolyzes the 68-Arg-|-Ala-69 bond and inhibits neurotransmitter release. It remains unknown whether BoNT/X is ever produced, or what organisms it targets. In terms of tissue distribution, nervous system, skeletal muscle and adipose tissue.

It is found in the cytoplasmic vesicle. The protein localises to the secretory vesicle. Its subcellular location is the synaptic vesicle membrane. It localises to the synapse. The protein resides in the synaptosome. It is found in the cytoplasmic vesicle membrane. The protein localises to the mitochondrion outer membrane. In terms of biological role, involved in the targeting and/or fusion of transport vesicles to their target membrane. The polypeptide is Vesicle-associated membrane protein 1 (VAMP1) (Homo sapiens (Human)).